A 31-amino-acid chain; its full sequence is Photosystem I reaction center subunit XII (31 aa).

A helical transmembrane segment spans residues Gln7–Gly26.

The protein belongs to the PsaM family.

The protein localises to the plastid. The protein resides in the chloroplast thylakoid membrane. This Euglena mutabilis protein is Photosystem I reaction center subunit XII.